The sequence spans 754 residues: Lysyl oxidase homolog 3 (754 aa).

Residues 1–26 (MRAVSVWYCCPWGLLLLHCLCSFSVG) form the signal peptide. SRCR domains follow at residues 45–146 (FRLA…VICK), 170–283 (VRLR…VSCV), 308–408 (VRLK…VRCN), and 418–526 (IRLS…VICS). 17 disulfide bridges follow: Cys71/Cys135, Cys84/Cys145, Cys115/Cys125, Cys202/Cys272, Cys215/Cys282, Cys249/Cys259, Cys333/Cys397, Cys346/Cys407, Cys377/Cys387, Cys447/Cys512, Cys460/Cys525, Cys493/Cys503, Cys555/Cys561, Cys607/Cys655, Cys639/Cys645, Cys667/Cys677, and Cys714/Cys728. The N-linked (GlcNAc...) asparagine glycan is linked to Asn112. N-linked (GlcNAc...) asparagine glycosylation occurs at Asn267. Asn391 and Asn482 each carry an N-linked (GlcNAc...) asparagine glycan. Residues 530–733 (SDLLLHSALV…WVHNCHIGDA (204 aa)) are lysyl-oxidase like. 3 residues coordinate Cu cation: His608, His610, and His612. A glycan (N-linked (GlcNAc...) asparagine) is linked at Asn626. A cross-link (lysine tyrosylquinone (Lys-Tyr)) is located at residues 635–671 (KASFCLEDTECQEDVSKRYECANFGEQGITVGCWDLY). Tyr671 carries the post-translational modification 2',4',5'-topaquinone.

Belongs to the lysyl oxidase family. The cofactor is Cu cation. Lysine tyrosylquinone residue is required as a cofactor. Post-translationally, the lysine tyrosylquinone cross-link (LTQ) is generated by condensation of the epsilon-amino group of a lysine with a topaquinone produced by oxidation of tyrosine. As to expression, expressed in palate: predominantly present in the palate mesenchyme and tongue (at protein level). In spine, expressed in the original intervertebral disk, cartilage primordia, anterior and posterior longitudinal ligaments, meninges of spinal cord, lung and heart. In eyes, strongly expressed in the skin of the eyelid and weakly expressed in the cornea and sclera. In lung, predominantly expressed in the pulmonary mesenchyme. In developing muscle, expressed at myofiber ends (at protein level).

It localises to the secreted. The protein localises to the extracellular space. It is found in the cytoplasm. The protein resides in the nucleus. It catalyses the reaction L-lysyl-[protein] + O2 + H2O = (S)-2-amino-6-oxohexanoyl-[protein] + H2O2 + NH4(+). The enzyme catalyses N(6)-acetyl-L-lysyl-[protein] + O2 + H2O = acetamide + (S)-2-amino-6-oxohexanoyl-[protein] + H2O2. Its function is as follows. Protein-lysine 6-oxidase that mediates the oxidation of peptidyl lysine residues to allysine in target proteins. Catalyzes the post-translational oxidative deamination of peptidyl lysine residues in precursors of elastin and different types of collagens, a prerequisite in the formation of cross-links between collagens and elastin. Required for somite boundary formation by catalyzing oxidation of fibronectin (FN1), enhancing integrin signaling in myofibers and their adhesion to the myotendinous junction (MTJ). Acts as a regulator of inflammatory response by inhibiting differentiation of naive CD4(+) T-cells into T-helper Th17 or regulatory T-cells (Treg): acts by interacting with STAT3 in the nucleus and catalyzing both deacetylation and oxidation of lysine residues on STAT3, leading to disrupt STAT3 dimerization and inhibit STAT3 transcription activity. Oxidation of lysine residues to allysine on STAT3 preferentially takes place on lysine residues that are acetylated. Also able to catalyze deacetylation of lysine residues on STAT3. In Mus musculus (Mouse), this protein is Lysyl oxidase homolog 3.